We begin with the raw amino-acid sequence, 394 residues long: Phosphoglycerate kinase (394 aa).

Substrate contacts are provided by residues 21–23, Arg36, 59–62, Arg118, and Arg151; these read DFN and HLGR. A Phosphoserine modification is found at Ser183. Residues Lys201 and Gly292 each coordinate ATP. The residue at position 299 (Thr299) is a Phosphothreonine. ATP-binding positions include Glu323 and 350-353; that span reads GGDS.

It belongs to the phosphoglycerate kinase family. As to quaternary structure, monomer.

The protein resides in the cytoplasm. The enzyme catalyses (2R)-3-phosphoglycerate + ATP = (2R)-3-phospho-glyceroyl phosphate + ADP. It functions in the pathway carbohydrate degradation; glycolysis; pyruvate from D-glyceraldehyde 3-phosphate: step 2/5. In Bacillus anthracis (strain A0248), this protein is Phosphoglycerate kinase.